The chain runs to 556 residues: Glutamine--tRNA ligase (556 aa).

The 'HIGH' region motif lies at 39-49 (PEPNGYLHIGH). Residues 40-42 (EPN) and 46-52 (HIGHAKS) contribute to the ATP site. L-glutamine is bound by residues Asp-72 and Tyr-217. Residues Thr-236 and 267 to 268 (RL) each bind ATP. Positions 274-278 (LTSKR) match the 'KMSKS' region motif.

Belongs to the class-I aminoacyl-tRNA synthetase family. In terms of assembly, monomer.

It is found in the cytoplasm. It catalyses the reaction tRNA(Gln) + L-glutamine + ATP = L-glutaminyl-tRNA(Gln) + AMP + diphosphate. The polypeptide is Glutamine--tRNA ligase (Haemophilus ducreyi (strain 35000HP / ATCC 700724)).